The following is a 679-amino-acid chain: Probable metal-nicotianamine transporter YSL18 (679 aa).

The segment covering 1 to 17 has biased composition (basic and acidic residues); it reads MESVGDPRDGPSTERAF. Residues 1–21 are disordered; that stretch reads MESVGDPRDGPSTERAFEGQP. Transmembrane regions (helical) follow at residues 29 to 49, 51 to 71, 101 to 121, 144 to 164, 211 to 231, 255 to 275, 309 to 329, 379 to 399, 407 to 427, 441 to 461, 497 to 517, 547 to 567, 593 to 613, and 627 to 647; these read VTLR…SVMM, LVFT…LGFF, CVVA…LLAM, FGRM…AIVP, LASL…NCGF, VGIG…GSII, VFCA…AISL, FAIS…PLMY, VAAA…GTGV, ILMF…SLVI, VIGT…FHHF, LPKY…AVCA, FLLV…VFLW, and VLAS…ALLA.

It belongs to the YSL (TC 2.A.67.2) family.

It is found in the membrane. May be involved in the transport of nicotianamine-chelated metals. This chain is Probable metal-nicotianamine transporter YSL18 (YSL18), found in Oryza sativa subsp. japonica (Rice).